A 316-amino-acid polypeptide reads, in one-letter code: Pantothenate kinase (316 aa).

95–102 is an ATP binding site; the sequence is GSVAVGKS.

The protein belongs to the prokaryotic pantothenate kinase family.

It localises to the cytoplasm. The catalysed reaction is (R)-pantothenate + ATP = (R)-4'-phosphopantothenate + ADP + H(+). The protein operates within cofactor biosynthesis; coenzyme A biosynthesis; CoA from (R)-pantothenate: step 1/5. The sequence is that of Pantothenate kinase from Yersinia pseudotuberculosis serotype O:3 (strain YPIII).